Consider the following 83-residue polypeptide: ATP synthase subunit c (83 aa).

Helical transmembrane passes span I10 to L30 and M52 to F72.

This sequence belongs to the ATPase C chain family. F-type ATPases have 2 components, F(1) - the catalytic core - and F(0) - the membrane proton channel. F(1) has five subunits: alpha(3), beta(3), gamma(1), delta(1), epsilon(1). F(0) has three main subunits: a(1), b(2) and c(10-14). The alpha and beta chains form an alternating ring which encloses part of the gamma chain. F(1) is attached to F(0) by a central stalk formed by the gamma and epsilon chains, while a peripheral stalk is formed by the delta and b chains.

It is found in the cell inner membrane. Functionally, f(1)F(0) ATP synthase produces ATP from ADP in the presence of a proton or sodium gradient. F-type ATPases consist of two structural domains, F(1) containing the extramembraneous catalytic core and F(0) containing the membrane proton channel, linked together by a central stalk and a peripheral stalk. During catalysis, ATP synthesis in the catalytic domain of F(1) is coupled via a rotary mechanism of the central stalk subunits to proton translocation. In terms of biological role, key component of the F(0) channel; it plays a direct role in translocation across the membrane. A homomeric c-ring of between 10-14 subunits forms the central stalk rotor element with the F(1) delta and epsilon subunits. This Shewanella loihica (strain ATCC BAA-1088 / PV-4) protein is ATP synthase subunit c.